Consider the following 165-residue polypeptide: MDIAHDLQSIGAQEQALVFPHFDPARAWALGNRMHALATSRGHAIAIDIATFGQPLFYAALAGATPDNADWVRRKRNVVAHFRRSSYAIGLRMQQAGATLADKHGLPVAEYASHGGSFPLTVAGAGVIGSITASGLPQRADHEFVVEALCAELGHDYAVLALARS.

This sequence belongs to the UPF0303 family.

In Burkholderia cenocepacia (strain ATCC BAA-245 / DSM 16553 / LMG 16656 / NCTC 13227 / J2315 / CF5610) (Burkholderia cepacia (strain J2315)), this protein is UPF0303 protein BceJ2315_15790.